The sequence spans 49 residues: uncharacterized protein (49 aa).

This is an uncharacterized protein from Saccharomyces cerevisiae (strain ATCC 204508 / S288c) (Baker's yeast).